Here is a 210-residue protein sequence, read N- to C-terminus: Probable GTP-binding protein EngB (210 aa).

The EngB-type G domain maps to 25 to 199; that stretch reads RGIEVAFAGR…RQKLDSWFSE (175 aa). GTP is bound by residues 33–40, 60–64, 78–81, 145–148, and 178–180; these read GRSNAGKS, GRTQL, DLPG, TKAD, and FSS. S40 and T62 together coordinate Mg(2+).

Belongs to the TRAFAC class TrmE-Era-EngA-EngB-Septin-like GTPase superfamily. EngB GTPase family. The cofactor is Mg(2+).

Its function is as follows. Necessary for normal cell division and for the maintenance of normal septation. This Salmonella paratyphi B (strain ATCC BAA-1250 / SPB7) protein is Probable GTP-binding protein EngB.